A 357-amino-acid polypeptide reads, in one-letter code: MGSLESEKTVTGYAARDSSGHLSPYTYTLRNKGPEDVIVRVIYCGICHSDLVQMHNEMGMSNYPMVPGHEVVGVVTEIGSEVKKFKVGEHVGVGCIVGSCRSCSNCNGSMEQYCSKRIWTYNDVNHDGTPTQGGFASSMVVDQMFVVRIPENLPLEQAAPLLCAGVTVYSPMKHFGMTEPGKKCGILGLGGVGHMGVKIAKAFGLHVTVISSSDKKKEEALEVLGADAYLVSKDAEKMQEAAESLDYIMDTIPVAHPLEPYLALLKTNGKLVMLGVVPEPLHFVTPLLILGRRSIAGSFIGSMEETQETLDFCAEKKVSSMIEVVGLDYINTAMERLVKNDVRYRFVVDVARSNLDK.

Cys-47 lines the Zn(2+) pocket. Ser-49 contributes to the NADP(+) binding site. Zn(2+) is bound by residues His-69, Glu-70, Cys-100, Cys-103, Cys-106, Cys-114, and Cys-163. NADP(+) contacts are provided by residues Thr-167, 188 to 193, 211 to 216, Thr-251, Gly-275, and 298 to 300; these read GLGGVG, SSSDKK, and SFI.

Belongs to the zinc-containing alcohol dehydrogenase family. In terms of assembly, homodimer. It depends on Zn(2+) as a cofactor.

It carries out the reaction (E)-cinnamyl alcohol + NADP(+) = (E)-cinnamaldehyde + NADPH + H(+). The enzyme catalyses (E)-coniferol + NADP(+) = (E)-coniferaldehyde + NADPH + H(+). It catalyses the reaction (E)-sinapyl alcohol + NADP(+) = (E)-sinapaldehyde + NADPH + H(+). The catalysed reaction is (E)-4-coumaroyl alcohol + NADP(+) = (E)-4-coumaraldehyde + NADPH + H(+). It carries out the reaction (E)-caffeyl alcohol + NADP(+) = (E)-caffeyl aldehyde + NADPH + H(+). Its pathway is aromatic compound metabolism; phenylpropanoid biosynthesis. Functionally, involved in lignin biosynthesis. Catalyzes the final step specific for the production of lignin monomers. Catalyzes the NADPH-dependent reduction of coniferaldehyde, 5-hydroxyconiferaldehyde, sinapaldehyde, 4-coumaraldehyde and caffeyl aldehyde to their respective alcohols. The protein is Probable cinnamyl alcohol dehydrogenase 2 (CAD2) of Picea abies (Norway spruce).